The chain runs to 267 residues: Transcription factor Spi-B (267 aa).

The tract at residues 1–31 (MLALEAAQLDGPHLSCLYPEGVFYDLDSCKP) is TAD1 (Acidic). Residues 41–62 (LDSTWGWTEAPPAPAIAPYEAF) are TAD2. A DNA-binding region (ETS) is located at residues 174 to 257 (LRLYQFLLGL…VKRKLTYQFD (84 aa)).

It belongs to the ETS family. In terms of assembly, can form homotypic interactions. Interacts with IRF4/Pip. Interacts with JUN. Interacts with TBP. May also interact with CREBBP and EP300. Interacts with NONO/p54(nrb). In terms of tissue distribution, expressed in the medulla of the thymus, the spleen and germinal centers of the lymph nodes. Expressed in B-cells and T-cells, expression increases during B-cell maturation and decreases during T-cell maturation.

It localises to the nucleus. Functionally, sequence specific transcriptional activator which binds to the PU-box, a purine-rich DNA sequence (5'-GAGGAA-3') that can act as a lymphoid-specific enhancer. Promotes development of plasmacytoid dendritic cells (pDCs), also known as type 2 DC precursors (pre-DC2) or natural interferon (IFN)-producing cells. These cells have the capacity to produce large amounts of interferon and block viral replication. Required for B-cell receptor (BCR) signaling, which is necessary for normal B-cell development and antigenic stimulation. This chain is Transcription factor Spi-B (Spib), found in Mus musculus (Mouse).